Here is a 382-residue protein sequence, read N- to C-terminus: Gas vesicle protein C1 (382 aa).

Residues 1–18 (MSVTDKRDEMSTARDKFA) show a composition bias toward basic and acidic residues. Positions 1-21 (MSVTDKRDEMSTARDKFAESQ) are disordered. A run of 7 repeats spans residues 22–60 (QEFE…TNTT), 61–92 (DAFH…REMQ), 93–130 (DAFE…NSTH), 131–168 (GAFE…IAVQ), 169–200 (DAFD…DATA), 201–240 (DAFA…ETTE), and 241–284 (DAFV…VSPD). The interval 22–284 (QEFESYADEF…VEAEAEVSPD (263 aa)) is 7 X approximate tandem repeats. Residues 260–302 (GAAEAEAEPVEADADVEAEAEVSPDEAGGESAGTEEEETEPAE) are compositionally biased toward acidic residues. The segment at 260–382 (GAAEAEAEPV…DVPLRPDDKT (123 aa)) is disordered. Over residues 303 to 316 (VETAAPEVEGSPAD) the composition is skewed to low complexity. The segment covering 317–336 (TADEAEDTEAEEETEEEAPE) has biased composition (acidic residues). A compositionally biased stretch (basic and acidic residues) spans 365–382 (EYRDEYGEDVPLRPDDKT).

It belongs to the halobacterial gas vesicle GvpC family. In terms of assembly, forms homodimers, interacts with GvpF1, GvpH1, GvpI1, GvpL1, GvpN1 and GvpO1 via its C-terminus (residues 329-382).

The protein resides in the gas vesicle. The protein localises to the cytoplasm. Confers stability, involved in shaping gas vesicles. Gas vesicles are hollow, gas filled proteinaceous nanostructures found in several microbial planktonic microorganisms. They allow positioning of halobacteria at the optimal depth for growth in the poorly aerated, shallow brine pools of their habitat. Functionally, expression of a 9.5 kb p-vac DNA fragment containing 2 divergently transcribed regions (gvpD-gvpE-gvpF-gvpG-gvpH-gvpI-gvpJ-gvpK-gvpL-gvpM and gvpA-gvpC-gvpN-gvpO) allows H.volcanii to produce gas vesicles. A similar region restores gas vesicle production in H.halobium without the p-vac locus, but it still has the c-vac locus. This chain is Gas vesicle protein C1 (gvpC1), found in Halobacterium salinarum (strain ATCC 700922 / JCM 11081 / NRC-1) (Halobacterium halobium).